A 530-amino-acid polypeptide reads, in one-letter code: Laccase-2 (530 aa).

The signal sequence occupies residues 1–23 (MLLSSAFVGSCLAILNFAAAVSA). 2 Plastocyanin-like domains span residues 36–154 (NKVI…YDPE) and 167–311 (TTII…RYTN). Residue N82 is glycosylated (N-linked (GlcNAc...) asparagine). Cu cation is bound by residues H88 and H90. 2 cysteine pairs are disulfide-bonded: C109–C520 and C141–C228. A glycan (N-linked (GlcNAc...) asparagine) is linked at N120. Cu cation contacts are provided by H133 and H135. N-linked (GlcNAc...) asparagine glycosylation is found at N191, N240, N292, N311, N366, N375, N392, and N412. Residues 379 to 504 (YVNPTVPVLL…FAVVLAEAPQ (126 aa)) enclose the Plastocyanin-like 3 domain. Cu cation contacts are provided by H428, H431, H433, H484, C485, H486, and H490.

The protein belongs to the multicopper oxidase family. The cofactor is Cu cation.

The protein localises to the secreted. The enzyme catalyses 4 hydroquinone + O2 = 4 benzosemiquinone + 2 H2O. Its activity is regulated as follows. Inhibited by chloride ions. Inhibited by citrate. Inhibited by oxalate. Activated by acetate. Its function is as follows. In vitro, has activity towards 2,2'-azino-bis(3-ethylbenzthiazoline-6-sulfonic acid) (ABTS), 2,6-dimethoxy-phenol, and guaiacol. Although brown rot fungi preferentially degrade hemicellulose and cellulose, the enzyme may contribute to generating small amounts of lignin breakdown products required for catalytic reactions. The polypeptide is Laccase-2 (Fomitopsis schrenkii (Brown rot fungus)).